The chain runs to 209 residues: Uracil phosphoribosyltransferase (209 aa).

5-phospho-alpha-D-ribose 1-diphosphate is bound by residues Arg79, Arg104, and 131 to 139; that span reads DPMLATGNS. Uracil contacts are provided by residues Ile194 and 199–201; that span reads GDA. Asp200 provides a ligand contact to 5-phospho-alpha-D-ribose 1-diphosphate.

The protein belongs to the UPRTase family. Mg(2+) is required as a cofactor.

The catalysed reaction is UMP + diphosphate = 5-phospho-alpha-D-ribose 1-diphosphate + uracil. It participates in pyrimidine metabolism; UMP biosynthesis via salvage pathway; UMP from uracil: step 1/1. With respect to regulation, allosterically activated by GTP. In terms of biological role, catalyzes the conversion of uracil and 5-phospho-alpha-D-ribose 1-diphosphate (PRPP) to UMP and diphosphate. The protein is Uracil phosphoribosyltransferase of Polaromonas naphthalenivorans (strain CJ2).